A 159-amino-acid polypeptide reads, in one-letter code: Ornithine decarboxylase antizyme (159 aa).

It belongs to the ODC antizyme family. Interacts with ODC1 and thereby sterically blocks ODC homodimerization.

Functionally, ornithine decarboxylase (ODC) antizyme protein that negatively regulates ODC activity and intracellular polyamine biosynthesis and uptake in response to increased intracellular polyamine levels. Binds to ODC monomers, inhibiting the assembly of the functional ODC homodimer, and targets the monomers for ubiquitin-independent proteolytic destruction by the 26S proteasome. This is Ornithine decarboxylase antizyme from Caenorhabditis elegans.